The following is a 473-amino-acid chain: MINFETVIGIEIHIELKTKTKMFSPVEINFNAESNTKANQIDLGYPGTLPQVNKKAVKYAIMLAKALNMQIDSNLRFDRKHYFYPDLPKGYQITQFYHPIGREGQIKLNNNGKEFEVNIERIHLEEDTARQHHKDNYSQLDYNRAGIPLIEIVTHPVLRSSDEACLYVDAIRKVVQTLEISEGRLEIGSLRADINISIRPLGSKSFSNKVEIKNLNSLKNIKLAIEEEIALQRAKFFANEEVLQQTKKIDEKTLKLQVLRTKTSTIDYRYFPEPNIPFIKLSKKFISSVKLKELPWEKEARYKSYNLNSIYLNSLLDDIHLANYFDSISYPDKDKLSKIFFAEVVSLANSKEMKAYHLNIDPENITKAINLLDEEVISGKSLKKLIPLLVNFKSDIKKLVKQNSLEQISDPNLISNIIKEIIKTNSELVKEYPTRQEKVLKFVLGKLMKDTGGQVNPTVANEIAIKSLDEVFK.

Belongs to the GatB/GatE family. GatB subfamily. Heterotrimer of A, B and C subunits.

The enzyme catalyses L-glutamyl-tRNA(Gln) + L-glutamine + ATP + H2O = L-glutaminyl-tRNA(Gln) + L-glutamate + ADP + phosphate + H(+). It catalyses the reaction L-aspartyl-tRNA(Asn) + L-glutamine + ATP + H2O = L-asparaginyl-tRNA(Asn) + L-glutamate + ADP + phosphate + 2 H(+). In terms of biological role, allows the formation of correctly charged Asn-tRNA(Asn) or Gln-tRNA(Gln) through the transamidation of misacylated Asp-tRNA(Asn) or Glu-tRNA(Gln) in organisms which lack either or both of asparaginyl-tRNA or glutaminyl-tRNA synthetases. The reaction takes place in the presence of glutamine and ATP through an activated phospho-Asp-tRNA(Asn) or phospho-Glu-tRNA(Gln). In Mycoplasmopsis synoviae (strain 53) (Mycoplasma synoviae), this protein is Aspartyl/glutamyl-tRNA(Asn/Gln) amidotransferase subunit B.